The chain runs to 95 residues: Acyl carrier protein (95 aa).

Positions Lys-4–Val-79 constitute a Carrier domain. Ser-39 carries the post-translational modification O-(pantetheine 4'-phosphoryl)serine.

The protein belongs to the acyl carrier protein (ACP) family. 4'-phosphopantetheine is transferred from CoA to a specific serine of apo-ACP by AcpS. This modification is essential for activity because fatty acids are bound in thioester linkage to the sulfhydryl of the prosthetic group.

Its subcellular location is the cytoplasm. Its pathway is lipid metabolism; fatty acid biosynthesis. Carrier of the growing fatty acid chain in fatty acid biosynthesis. In Saccharopolyspora erythraea (strain ATCC 11635 / DSM 40517 / JCM 4748 / NBRC 13426 / NCIMB 8594 / NRRL 2338), this protein is Acyl carrier protein.